An 821-amino-acid chain; its full sequence is DNA ligase (821 aa).

NAD(+) contacts are provided by residues 50 to 54 (DAEYD), 99 to 100 (SL), and Glu140. Catalysis depends on Lys142, which acts as the N6-AMP-lysine intermediate. Positions 163, 200, 319, and 343 each coordinate NAD(+). Positions 452, 455, 470, and 476 each coordinate Zn(2+). Positions 742-821 (AAALPLEGKT…AGLQALLAGN (80 aa)) constitute a BRCT domain.

It belongs to the NAD-dependent DNA ligase family. LigA subfamily. The cofactor is Mg(2+). Mn(2+) serves as cofactor.

It carries out the reaction NAD(+) + (deoxyribonucleotide)n-3'-hydroxyl + 5'-phospho-(deoxyribonucleotide)m = (deoxyribonucleotide)n+m + AMP + beta-nicotinamide D-nucleotide.. Functionally, DNA ligase that catalyzes the formation of phosphodiester linkages between 5'-phosphoryl and 3'-hydroxyl groups in double-stranded DNA using NAD as a coenzyme and as the energy source for the reaction. It is essential for DNA replication and repair of damaged DNA. The sequence is that of DNA ligase from Chromobacterium violaceum (strain ATCC 12472 / DSM 30191 / JCM 1249 / CCUG 213 / NBRC 12614 / NCIMB 9131 / NCTC 9757 / MK).